The sequence spans 271 residues: Phosphate import ATP-binding protein PstB (271 aa).

In terms of domain architecture, ABC transporter spans 24–266 (MIGQDVSVYY…PDDPRTQDYI (243 aa)). 56-63 (GPSGCGKS) is an ATP binding site.

It belongs to the ABC transporter superfamily. Phosphate importer (TC 3.A.1.7) family. In terms of assembly, the complex is composed of two ATP-binding proteins (PstB), two transmembrane proteins (PstC and PstA) and a solute-binding protein (PstS).

It is found in the cell inner membrane. It carries out the reaction phosphate(out) + ATP + H2O = ADP + 2 phosphate(in) + H(+). Its function is as follows. Part of the ABC transporter complex PstSACB involved in phosphate import. Responsible for energy coupling to the transport system. This chain is Phosphate import ATP-binding protein PstB, found in Rhizobium etli (strain ATCC 51251 / DSM 11541 / JCM 21823 / NBRC 15573 / CFN 42).